A 436-amino-acid chain; its full sequence is MSMLQTLWRSDPAVARIIDGEMRRQRDGLELIASENYASRAVMEAQGSALTNKYAEGYPGARYYGGCEWVDQVEDLARARVKELFGAEYANVQPHSGSQANMAVYFTFLRPGDKVLGMNLAHGGHLTHGSPVNFSGQLYTFVAYGIDPKTERIDYDQVAEIARRERPKMITVGASAYSRAIDFAIFRQIADEVGAFLFADIAHPAGLIAKGLLPSPIPYAHVVTSTTHKTLRGPRGGIIMMGKDFENPFGLKAAKSGRTLMMSELLDKMVIPGVQGGPLMHVIAAKAVGFGENLQPEFETYARQIIRNAQTLAGALMARGYHILSGGTDNHLMLIDLRNKGVSGKAAQEALDRAAITTNKNAVPNDDKSPLITSGIRLGTPALTTRGMKEPEMEQIAALIDDVITHINDDHTINRVREEVFALCARFPVPGLEPSA.

Residues Leu120 and 124 to 126 (GHL) each bind (6S)-5,6,7,8-tetrahydrofolate. Lys229 bears the N6-(pyridoxal phosphate)lysine mark.

This sequence belongs to the SHMT family. Homodimer. Pyridoxal 5'-phosphate serves as cofactor.

The protein resides in the cytoplasm. The enzyme catalyses (6R)-5,10-methylene-5,6,7,8-tetrahydrofolate + glycine + H2O = (6S)-5,6,7,8-tetrahydrofolate + L-serine. Its pathway is one-carbon metabolism; tetrahydrofolate interconversion. It participates in amino-acid biosynthesis; glycine biosynthesis; glycine from L-serine: step 1/1. Catalyzes the reversible interconversion of serine and glycine with tetrahydrofolate (THF) serving as the one-carbon carrier. This reaction serves as the major source of one-carbon groups required for the biosynthesis of purines, thymidylate, methionine, and other important biomolecules. Also exhibits THF-independent aldolase activity toward beta-hydroxyamino acids, producing glycine and aldehydes, via a retro-aldol mechanism. In Roseiflexus castenholzii (strain DSM 13941 / HLO8), this protein is Serine hydroxymethyltransferase.